Here is a 359-residue protein sequence, read N- to C-terminus: MTSAATLNADSPQPVEQRTDVLVVGAGPVGLFAAFQAGVLGMSCVLVDALDRPGGQCTELYPEKPIYDIPALVSCTAQELVDRLMAQCAPFNYPILCGRRAETVETLENEHGRRFRVTTSAGDVFDCAAVLITAGNGAFTPQRVALPEAAALEGRHLHYAVRDTARFTGKRVVIAGGGDSALDWALALRKVAARVTLVHRREGFRAADASVAEMRAAVVAGEMDFVLGMLSRLDSTPDGTLIGAAIRGRDGETVLPCDELIALYGLVSEPGPIVNWGVEMRAGRITVETTAYETSRPGVFAAGDIALYPNKQKLILSGFHEVAMALRRAYRYANPDKTLVHTHSSNDAGLQTKLHVTAE.

Positions 48, 56, 61, 101, 139, 304, and 345 each coordinate FAD.

Belongs to the ferredoxin--NADP reductase type 2 family. In terms of assembly, homodimer. Requires FAD as cofactor.

The enzyme catalyses 2 reduced [2Fe-2S]-[ferredoxin] + NADP(+) + H(+) = 2 oxidized [2Fe-2S]-[ferredoxin] + NADPH. In Ralstonia pickettii (strain 12J), this protein is Ferredoxin--NADP reductase.